A 287-amino-acid chain; its full sequence is Pirin-1 (287 aa).

Position 2 is an N-acetylthreonine (Thr-2).

This sequence belongs to the pirin family. In terms of assembly, interacts with the G protein alpha-1 subunit GPA1. Interacts with NFYB6 and NFYB9.

It is found in the nucleus. Involved in abscisic acid signal transduction. Plays a role in seed germination and early seedling development. Involved in the blue light (BL) signaling. This is Pirin-1 (PRN1) from Arabidopsis thaliana (Mouse-ear cress).